The sequence spans 366 residues: Prostaglandin F2-alpha receptor (366 aa).

Over 1–31 (MSMNSSKQPVSPAAGLIANTTCQTENRLSVF) the chain is Extracellular. N-linked (GlcNAc...) asparagine glycans are attached at residues asparagine 4 and asparagine 19. A helical membrane pass occupies residues 32–55 (FSIIFMTVGILSNSLAIAILMKAY). Residues 56–69 (QRFRQKSKASFLLL) are Cytoplasmic-facing. The chain crosses the membrane as a helical span at residues 70–90 (ASGLVITDFFGHLINGGIAVF). Residues 91–109 (VYASDKDWIRFDQSNILCS) are Extracellular-facing. A disulfide bridge links cysteine 108 with cysteine 186. Residues 110-131 (IFGISMVFSGLCPLFLGSAMAI) traverse the membrane as a helical segment. At 132-152 (ERCIGVTNPIFHSTKITSKHV) the chain is on the cytoplasmic side. The helical transmembrane segment at 153 to 175 (KMILSGVCMFAVFVAVLPILGHR) threads the bilayer. Residues 176–198 (DYQIQASRTWCFYNTEHIEDWED) lie on the Extracellular side of the membrane. Residues 199–224 (RFYLLFFSFLGLLALGVSFSCNAVTG) traverse the membrane as a helical segment. Over 225–250 (VTLLRVKFRSQQHRQGRSHHLEMIIQ) the chain is Cytoplasmic. A helical membrane pass occupies residues 251 to 267 (LLAIMCVSCVCWSPFLV). Residues 268 to 285 (TMANIAINGNNSPVTCET) lie on the Extracellular side of the membrane. A helical transmembrane segment spans residues 286–307 (TLFALRMATWNQILDPWVYILL). At 308–366 (RKAVLRNLYKLASRCCGVNIISLHIWELSSIKNSLKVAAISESPAAEKESQQASSEAGL) the chain is on the cytoplasmic side.

This sequence belongs to the G-protein coupled receptor 1 family.

The protein resides in the cell membrane. Its function is as follows. Receptor for prostaglandin F2-alpha (PGF2-alpha). The activity of this receptor is mediated by G proteins which activate a phosphatidylinositol-calcium second messenger system. Initiates luteolysis in the corpus luteum. The protein is Prostaglandin F2-alpha receptor (Ptgfr) of Mus musculus (Mouse).